The following is a 180-amino-acid chain: Large ribosomal subunit protein uL6 (180 aa).

This sequence belongs to the universal ribosomal protein uL6 family. Part of the 50S ribosomal subunit.

Its function is as follows. This protein binds to the 23S rRNA, and is important in its secondary structure. It is located near the subunit interface in the base of the L7/L12 stalk, and near the tRNA binding site of the peptidyltransferase center. The polypeptide is Large ribosomal subunit protein uL6 (Clostridium botulinum (strain Okra / Type B1)).